A 341-amino-acid chain; its full sequence is Anthranilate phosphoribosyltransferase (341 aa).

Residues glycine 84, 87–88 (GD), threonine 92, 94–97 (NVTT), 112–120 (KCGNRSVSS), and serine 124 each bind 5-phospho-alpha-D-ribose 1-diphosphate. Glycine 84 is an anthranilate binding site. Residue threonine 96 coordinates Mg(2+). Asparagine 115 is a binding site for anthranilate. An anthranilate-binding site is contributed by arginine 170. Aspartate 228 and glutamate 229 together coordinate Mg(2+).

It belongs to the anthranilate phosphoribosyltransferase family. In terms of assembly, homodimer. The cofactor is Mg(2+).

It catalyses the reaction N-(5-phospho-beta-D-ribosyl)anthranilate + diphosphate = 5-phospho-alpha-D-ribose 1-diphosphate + anthranilate. It functions in the pathway amino-acid biosynthesis; L-tryptophan biosynthesis; L-tryptophan from chorismate: step 2/5. Catalyzes the transfer of the phosphoribosyl group of 5-phosphorylribose-1-pyrophosphate (PRPP) to anthranilate to yield N-(5'-phosphoribosyl)-anthranilate (PRA). The polypeptide is Anthranilate phosphoribosyltransferase (Corynebacterium diphtheriae (strain ATCC 700971 / NCTC 13129 / Biotype gravis)).